Here is a 263-residue protein sequence, read N- to C-terminus: L-aspartate dehydrogenase (263 aa).

NAD(+) contacts are provided by Ala120 and Asn186. Residue His216 is part of the active site.

This sequence belongs to the L-aspartate dehydrogenase family.

The enzyme catalyses L-aspartate + NADP(+) + H2O = oxaloacetate + NH4(+) + NADPH + H(+). It carries out the reaction L-aspartate + NAD(+) + H2O = oxaloacetate + NH4(+) + NADH + H(+). Its pathway is cofactor biosynthesis; NAD(+) biosynthesis; iminoaspartate from L-aspartate (dehydrogenase route): step 1/1. In terms of biological role, specifically catalyzes the NAD or NADP-dependent dehydrogenation of L-aspartate to iminoaspartate. This chain is L-aspartate dehydrogenase, found in Acinetobacter baylyi (strain ATCC 33305 / BD413 / ADP1).